The primary structure comprises 331 residues: Adenosine deaminase (331 aa).

2 residues coordinate Zn(2+): H12 and H14. Substrate is bound by residues H14, D16, and G170. H197 provides a ligand contact to Zn(2+). E200 serves as the catalytic Proton donor. D278 contacts Zn(2+). D279 is a substrate binding site.

This sequence belongs to the metallo-dependent hydrolases superfamily. Adenosine and AMP deaminases family. Adenosine deaminase subfamily. It depends on Zn(2+) as a cofactor.

The enzyme catalyses adenosine + H2O + H(+) = inosine + NH4(+). It carries out the reaction 2'-deoxyadenosine + H2O + H(+) = 2'-deoxyinosine + NH4(+). Functionally, catalyzes the hydrolytic deamination of adenosine and 2-deoxyadenosine. The sequence is that of Adenosine deaminase from Shewanella baltica (strain OS185).